Consider the following 102-residue polypeptide: Large ribosomal subunit protein uL24 (102 aa).

Belongs to the universal ribosomal protein uL24 family. In terms of assembly, part of the 50S ribosomal subunit.

In terms of biological role, one of two assembly initiator proteins, it binds directly to the 5'-end of the 23S rRNA, where it nucleates assembly of the 50S subunit. One of the proteins that surrounds the polypeptide exit tunnel on the outside of the subunit. This chain is Large ribosomal subunit protein uL24, found in Finegoldia magna (strain ATCC 29328 / DSM 20472 / WAL 2508) (Peptostreptococcus magnus).